Consider the following 64-residue polypeptide: DNA gyrase inhibitor YacG (64 aa).

Zn(2+) contacts are provided by Cys-9, Cys-12, Cys-28, and Cys-32. The segment at 45 to 64 is disordered; it reads KRIPSAGDLSDSDDWSEQQP. The segment covering 54-64 has biased composition (acidic residues); the sequence is SDSDDWSEQQP.

It belongs to the DNA gyrase inhibitor YacG family. Interacts with GyrB. Zn(2+) is required as a cofactor.

Inhibits all the catalytic activities of DNA gyrase by preventing its interaction with DNA. Acts by binding directly to the C-terminal domain of GyrB, which probably disrupts DNA binding by the gyrase. The polypeptide is DNA gyrase inhibitor YacG (Klebsiella pneumoniae (strain 342)).